An 87-amino-acid chain; its full sequence is Beta-toxin Ct1a (87 aa).

The N-terminal stretch at 1-19 (MNSLLMITACLALIGTVWA) is a signal peptide. The LCN-type CS-alpha/beta domain maps to 20–85 (KEGYLVNHST…VWPLPKKTCN (66 aa)). 4 cysteine pairs are disulfide-bonded: cysteine 31–cysteine 84, cysteine 35–cysteine 60, cysteine 44–cysteine 65, and cysteine 48–cysteine 67. Asparagine 85 carries the asparagine amide modification.

The protein belongs to the long (4 C-C) scorpion toxin superfamily. Sodium channel inhibitor family. Beta subfamily. In terms of tissue distribution, expressed by the venom gland.

The protein resides in the secreted. Its function is as follows. Beta toxins bind voltage-independently at site-4 of sodium channels (Nav) and shift the voltage of activation toward more negative potentials thereby affecting sodium channel activation and promoting spontaneous and repetitive firing. Is lethal to mice but does not show toxicity to freshwater shrimp and crickets. In Centruroides tecomanus (Scorpion), this protein is Beta-toxin Ct1a.